Here is a 274-residue protein sequence, read N- to C-terminus: uncharacterized protein (274 aa).

Residues 99 to 206 (NNVISGYVDL…ESEMEIFIQK (108 aa)) adopt a coiled-coil conformation.

This is an uncharacterized protein from Dictyostelium discoideum (Social amoeba).